A 327-amino-acid polypeptide reads, in one-letter code: MTTIKQVALEAGVSKSTVSRFIAQNGYVSDEAREKIERAIKKLNFRPNLSAQSLKTKKNQLVGLLLPDISNPFFPMLAKGAEEFLKEKGYRVMLGNIGEKNQSEQDYLKVLIQSNAAGIISTHDFKEDFPDLDIPTVIVDRVGHKSNYGVFSDNESGGRLAAKVIVTAGAKKVAVVSGPLNATNINNRFKSSIAYLKEKQVDFKAFYSQSYDFEEIQKEAREVLANEENFDSIIAPSDIHAMAYIHEIHRLNKKIPEDIQIIGYDDIQMSQFIYPALSTIHQSAYQMGLEAAQLIYKIATDQAIEKSKIELPVHYVARETIRQKRKE.

Residues 1 to 56 (MTTIKQVALEAGVSKSTVSRFIAQNGYVSDEAREKIERAIKKLNFRPNLSAQSLKT) form the HTH lacI-type domain. The H-T-H motif DNA-binding region spans 4-23 (IKQVALEAGVSKSTVSRFIA).

Its function is as follows. Transcriptional repressor for the ribose rbsDACBK operon. The polypeptide is Ribose operon repressor (rbsR) (Lactococcus lactis subsp. lactis (strain IL1403) (Streptococcus lactis)).